Consider the following 193-residue polypeptide: Orotate phosphoribosyltransferase (193 aa).

116-124 (EDVVTTGKS) lines the 5-phospho-alpha-D-ribose 1-diphosphate pocket. 2 residues coordinate orotate: Thr-120 and Arg-148.

The protein belongs to the purine/pyrimidine phosphoribosyltransferase family. PyrE subfamily. As to quaternary structure, homodimer. Mg(2+) serves as cofactor.

The enzyme catalyses orotidine 5'-phosphate + diphosphate = orotate + 5-phospho-alpha-D-ribose 1-diphosphate. It participates in pyrimidine metabolism; UMP biosynthesis via de novo pathway; UMP from orotate: step 1/2. Its function is as follows. Catalyzes the transfer of a ribosyl phosphate group from 5-phosphoribose 1-diphosphate to orotate, leading to the formation of orotidine monophosphate (OMP). This Clostridium tetani (strain Massachusetts / E88) protein is Orotate phosphoribosyltransferase.